The following is a 350-amino-acid chain: uncharacterized protein (350 aa).

A signal peptide spans 1-26 (MKKSGWLVVALIALVVLGVVTSIAVN).

This is an uncharacterized protein from Archaeoglobus fulgidus (strain ATCC 49558 / DSM 4304 / JCM 9628 / NBRC 100126 / VC-16).